Reading from the N-terminus, the 177-residue chain is Large ribosomal subunit protein uL6 (177 aa).

Belongs to the universal ribosomal protein uL6 family. Part of the 50S ribosomal subunit.

In terms of biological role, this protein binds to the 23S rRNA, and is important in its secondary structure. It is located near the subunit interface in the base of the L7/L12 stalk, and near the tRNA binding site of the peptidyltransferase center. The protein is Large ribosomal subunit protein uL6 of Klebsiella pneumoniae subsp. pneumoniae (strain ATCC 700721 / MGH 78578).